We begin with the raw amino-acid sequence, 384 residues long: Histidinol-phosphate aminotransferase 2 (384 aa).

An N6-(pyridoxal phosphate)lysine modification is found at Lys-236.

Belongs to the class-II pyridoxal-phosphate-dependent aminotransferase family. Histidinol-phosphate aminotransferase subfamily. Homodimer. The cofactor is pyridoxal 5'-phosphate.

The catalysed reaction is L-histidinol phosphate + 2-oxoglutarate = 3-(imidazol-4-yl)-2-oxopropyl phosphate + L-glutamate. Its pathway is amino-acid biosynthesis; L-histidine biosynthesis; L-histidine from 5-phospho-alpha-D-ribose 1-diphosphate: step 7/9. This Nostoc sp. (strain PCC 7120 / SAG 25.82 / UTEX 2576) protein is Histidinol-phosphate aminotransferase 2 (hisC2).